We begin with the raw amino-acid sequence, 685 residues long: Twinkle mtDNA helicase (685 aa).

Residues 1–31 constitute a mitochondrion transit peptide; sequence MWLLLRRAYPLRILLPLRGEWVGRRGLPRSL. The tract at residues 1–122 is contributes to single strand DNA binding activity; that stretch reads MWLLLRRAYP…LCMTSLAEGS (122 aa). An N-terminal region (NTR) region spans residues 54 to 214; it reads PVTTTEIRQY…LVFPWFTPGS (161 aa). The interval 122 to 373 is required for hexamers formation and DNA helicase activity; the sequence is SWEDLQASVE…WHKSIVSFRQ (252 aa). The primase-like domain stretch occupies residues 215-335; sequence SGLRGLKLLG…LNPKRCSLVR (121 aa). The region spanning 385–636 is the SF4 helicase domain; sequence VEQAAGVRWS…LTFSIPPKSK (252 aa). The interval 406 to 591 is maybe required for stable oligomeric structure; it reads HRKGELTVFT…QEADNVLILQ (186 aa). Position 416-423 (416-423) interacts with ATP; sequence GPTGSGKT. Residues 454–482 adopt a coiled-coil conformation; sequence RVMLTQFAVTRLEEQLDKYEEWADRFEDL. Positions 641–685 are might negatively regulate ATPase activity; it reads KIKDDNGLVAKKSSSGKKGAAHQNPEICLGQDPSPAQPDTSKSSG. The tract at residues 642–685 is disordered; it reads IKDDNGLVAKKSSSGKKGAAHQNPEICLGQDPSPAQPDTSKSSG.

In terms of assembly, homohexamer (via C-terminus), which assembles in a ring-like structure. Homoheptamer, which assembles in a ring-like structure. Homooctamer, which assembles in a ring-like structure. Oligomers may sequentially eject two monomers (octamer&gt;heptamer&gt;hexamer) upon DNA binding. Oligomerization is Mg(2+), nucleotide and DNA-independent, however, Mg(2+) and nucleotide stabilize the homohexameric form. Interacts with POLG in vitro. Interacts with LONP1. As to expression, ubiquitous with the highest levels in the liver, heart and kidneys. The skeletal muscle, brain and testis showed lower but detectable expression. Expression is coregulated with MRPL43.

It localises to the mitochondrion matrix. It is found in the mitochondrion nucleoid. Its subcellular location is the mitochondrion inner membrane. It carries out the reaction ATP + H2O = ADP + phosphate + H(+). It catalyses the reaction Couples ATP hydrolysis with the unwinding of duplex DNA at the replication fork by translocating in the 5'-3' direction. This creates two antiparallel DNA single strands (ssDNA). The leading ssDNA polymer is the template for DNA polymerase III holoenzyme which synthesizes a continuous strand.. Mitochondrial helicase involved in mtDNA replication and repair. Might have a role in mtDNA repair. Has DNA strand separation activity needed to form a processive replication fork for leading strand synthesis which is catalyzed by the formation of a replisome complex with POLG and mtSDB. Preferentially unwinds DNA substrates with pre-existing 5'-and 3'- single-stranded tails but is also active on a 5'- flap substrate. Can dissociate the invading strand of immobile or mobile D-loop DNA structures irrespective of the single strand polarity of the third strand. In addition to its DNA strand separation activity, also has DNA strand annealing, DNA strand-exchange and DNA branch migration activities. The sequence is that of Twinkle mtDNA helicase from Mus musculus (Mouse).